The chain runs to 319 residues: Solute carrier family 25 member 34 (319 aa).

The interval 1–22 is disordered; the sequence is MNSAFSGPSSPTPGPSPPRPPL. Pro residues predominate over residues 10-22; the sequence is SPTPGPSPPRPPL. Solcar repeat units follow at residues 22-115, 119-212, and 222-313; these read LWPP…MQAA, DGPC…AKDW, and LSSL…LRQR. 6 helical membrane-spanning segments follow: residues 25–45, 63–83, 116–138, 188–209, 224–244, and 296–319; these read PLDF…TNPL, SYRR…RTDG, GVTD…GAFI, VNGA…FSSA, SLNT…IMTP, and LAPH…PYTH.

It belongs to the mitochondrial carrier (TC 2.A.29) family.

The protein resides in the mitochondrion inner membrane. The protein is Solute carrier family 25 member 34 (slc25a34) of Danio rerio (Zebrafish).